The primary structure comprises 452 residues: Tubulin alpha-8 chain (452 aa).

Positions 15, 74, 143, 147, 148, 182, 209, and 231 each coordinate GTP. A Mg(2+)-binding site is contributed by glutamate 74. Residue glutamate 257 is part of the active site.

The protein belongs to the tubulin family. Dimer of alpha and beta chains. A typical microtubule is a hollow water-filled tube with an outer diameter of 25 nm and an inner diameter of 15 nM. Alpha-beta heterodimers associate head-to-tail to form protofilaments running lengthwise along the microtubule wall with the beta-tubulin subunit facing the microtubule plus end conferring a structural polarity. Microtubules usually have 13 protofilaments but different protofilament numbers can be found in some organisms and specialized cells. Mg(2+) is required as a cofactor.

The protein resides in the cytoplasm. It localises to the cytoskeleton. It carries out the reaction GTP + H2O = GDP + phosphate + H(+). Functionally, tubulin is the major constituent of microtubules, a cylinder consisting of laterally associated linear protofilaments composed of alpha- and beta-tubulin heterodimers. Microtubules grow by the addition of GTP-tubulin dimers to the microtubule end, where a stabilizing cap forms. Below the cap, tubulin dimers are in GDP-bound state, owing to GTPase activity of alpha-tubulin. The protein is Tubulin alpha-8 chain (tba-8) of Caenorhabditis elegans.